The chain runs to 217 residues: Thiamine-phosphate synthase (217 aa).

4-amino-2-methyl-5-(diphosphooxymethyl)pyrimidine-binding positions include 39 to 43 and Asn-71; that span reads QYRDK. The Mg(2+) site is built by Asp-72 and Asp-91. Thr-110 provides a ligand contact to 4-amino-2-methyl-5-(diphosphooxymethyl)pyrimidine. 137 to 139 contributes to the 2-[(2R,5Z)-2-carboxy-4-methylthiazol-5(2H)-ylidene]ethyl phosphate binding site; sequence SNT. Position 140 (Lys-140) interacts with 4-amino-2-methyl-5-(diphosphooxymethyl)pyrimidine. Position 167 (Gly-167) interacts with 2-[(2R,5Z)-2-carboxy-4-methylthiazol-5(2H)-ylidene]ethyl phosphate.

It belongs to the thiamine-phosphate synthase family. Mg(2+) is required as a cofactor.

It catalyses the reaction 2-[(2R,5Z)-2-carboxy-4-methylthiazol-5(2H)-ylidene]ethyl phosphate + 4-amino-2-methyl-5-(diphosphooxymethyl)pyrimidine + 2 H(+) = thiamine phosphate + CO2 + diphosphate. It carries out the reaction 2-(2-carboxy-4-methylthiazol-5-yl)ethyl phosphate + 4-amino-2-methyl-5-(diphosphooxymethyl)pyrimidine + 2 H(+) = thiamine phosphate + CO2 + diphosphate. The enzyme catalyses 4-methyl-5-(2-phosphooxyethyl)-thiazole + 4-amino-2-methyl-5-(diphosphooxymethyl)pyrimidine + H(+) = thiamine phosphate + diphosphate. Its pathway is cofactor biosynthesis; thiamine diphosphate biosynthesis; thiamine phosphate from 4-amino-2-methyl-5-diphosphomethylpyrimidine and 4-methyl-5-(2-phosphoethyl)-thiazole: step 1/1. Condenses 4-methyl-5-(beta-hydroxyethyl)thiazole monophosphate (THZ-P) and 2-methyl-4-amino-5-hydroxymethyl pyrimidine pyrophosphate (HMP-PP) to form thiamine monophosphate (TMP). In Saccharophagus degradans (strain 2-40 / ATCC 43961 / DSM 17024), this protein is Thiamine-phosphate synthase.